Reading from the N-terminus, the 729-residue chain is Catalase-peroxidase (729 aa).

Positions 1–33 (MSAHNTNESAVGKCPFHEQKEEKSVLARGAGGG) are disordered. A compositionally biased stretch (basic and acidic residues) spans 15–25 (PFHEQKEEKSV). A cross-link (tryptophyl-tyrosyl-methioninium (Trp-Tyr) (with M-255)) is located at residues 108–229 (WHSAGTYRTV…LGATEMGLIY (122 aa)). H109 (proton acceptor) is an active-site residue. The tryptophyl-tyrosyl-methioninium (Tyr-Met) (with W-108) cross-link spans 229–255 (YVNPEGPEASGNPASAAPAIRATFGNM). H270 contacts heme b.

The protein belongs to the peroxidase family. Peroxidase/catalase subfamily. Homodimer or homotetramer. Heme b is required as a cofactor. Post-translationally, formation of the three residue Trp-Tyr-Met cross-link is important for the catalase, but not the peroxidase activity of the enzyme.

It carries out the reaction H2O2 + AH2 = A + 2 H2O. It catalyses the reaction 2 H2O2 = O2 + 2 H2O. Functionally, bifunctional enzyme with both catalase and broad-spectrum peroxidase activity. This Erwinia tasmaniensis (strain DSM 17950 / CFBP 7177 / CIP 109463 / NCPPB 4357 / Et1/99) protein is Catalase-peroxidase.